The primary structure comprises 394 residues: Probable ribosome production factor 1 (394 aa).

Disordered regions lie at residues 1–98 and 116–152; these read MIKI…PVLN and MKKEKHKKKMQERRARRKAGVPANPGHTIESLREKDQ. 2 stretches are compositionally biased toward acidic residues: residues 15-33 and 59-88; these read QDSDSDSSFDEEEPQDLEV and ASEDLKEEDDDDDEEENDDDDEEEDDDDDD. The span at 116-134 shows a compositional bias: basic residues; that stretch reads MKKEKHKKKMQERRARRKA. The 185-residue stretch at 185-369 folds into the Brix domain; sequence PKVLITFADN…LRSLQEGTFD (185 aa). The segment at 347–364 is RNA-binding; that stretch reads VKLRELGPRFTLKLRSLQ.

It is found in the nucleus. The protein localises to the nucleolus. Functionally, may be required for ribosome biogenesis. In Drosophila melanogaster (Fruit fly), this protein is Probable ribosome production factor 1.